Here is a 377-residue protein sequence, read N- to C-terminus: MTTENFGFKVLARDGAARQGEISMPRGVVRTPAFMPVGTAGTVKAMYMDQVKELGADIILGNTYHLMLRPGAERVARLGGLHEFGGWKGPILTDSGGFQVMSLAQLRKLNEHGVTFRSHIDGKAYEMTPERSIEIQGLLDSDIQMQLDECVALPSPEKNTERAMELSLRWAERCKVAFGDQPGKAMFGIVQGGDIARLRERSAEALKAMDLKGYSVGGLAVGEPQEVMLDMLEVVCPILPTEKPRYLMGVGTPDDILKSVARGIDMFDCVMPTRAGRHGLAFTRFGKVNLRNARHAEDHRPLDPQSDCPASRDYSRAYLHHLVKSGEALGAMLLTWNNLAYYQYLMKGIRAAIADGKFSDFTAETTEGWARGDMPAL.

Residue D94 is the Proton acceptor of the active site. Substrate is bound by residues D94 to F98, D148, Q191, and G218. Residues G249–D255 form an RNA binding region. D268 serves as the catalytic Nucleophile. Residues T273–R277 form an RNA binding; important for wobble base 34 recognition region.

The protein belongs to the queuine tRNA-ribosyltransferase family. As to quaternary structure, homodimer. Within each dimer, one monomer is responsible for RNA recognition and catalysis, while the other monomer binds to the replacement base PreQ1.

The catalysed reaction is 7-aminomethyl-7-carbaguanine + guanosine(34) in tRNA = 7-aminomethyl-7-carbaguanosine(34) in tRNA + guanine. It participates in tRNA modification; tRNA-queuosine biosynthesis. In terms of biological role, catalyzes the base-exchange of a guanine (G) residue with the queuine precursor 7-aminomethyl-7-deazaguanine (PreQ1) at position 34 (anticodon wobble position) in tRNAs with GU(N) anticodons (tRNA-Asp, -Asn, -His and -Tyr). Catalysis occurs through a double-displacement mechanism. The nucleophile active site attacks the C1' of nucleotide 34 to detach the guanine base from the RNA, forming a covalent enzyme-RNA intermediate. The proton acceptor active site deprotonates the incoming PreQ1, allowing a nucleophilic attack on the C1' of the ribose to form the product. After dissociation, two additional enzymatic reactions on the tRNA convert PreQ1 to queuine (Q), resulting in the hypermodified nucleoside queuosine (7-(((4,5-cis-dihydroxy-2-cyclopenten-1-yl)amino)methyl)-7-deazaguanosine). The protein is Queuine tRNA-ribosyltransferase of Brucella melitensis biotype 1 (strain ATCC 23456 / CCUG 17765 / NCTC 10094 / 16M).